The chain runs to 26 residues: DEAD-box ATP-dependent RNA helicase 1 (26 aa).

Positions arginine 1 to lysine 10 match the Q motif motif. Asparagine 11–threonine 16 provides a ligand contact to ATP. One can recognise a Helicase ATP-binding domain in the interval asparagine 11–lysine 26.

It belongs to the DEAD box helicase family. DDX6/DHH1 subfamily.

The protein localises to the cytoplasm. The protein resides in the P-body. The catalysed reaction is ATP + H2O = ADP + phosphate + H(+). In terms of biological role, ATP-dependent RNA helicase involved in mRNA turnover, and more specifically in mRNA decapping. In Catharanthus roseus (Madagascar periwinkle), this protein is DEAD-box ATP-dependent RNA helicase 1.